Reading from the N-terminus, the 918-residue chain is Isoleucine--tRNA ligase 1 (918 aa).

A 'HIGH' region motif is present at residues 57–67 (PYANGDIHIGH). E553 is a binding site for L-isoleucyl-5'-AMP. The short motif at 594–598 (KMSKS) is the 'KMSKS' region element. Position 597 (K597) interacts with ATP. Zn(2+)-binding residues include C885, C888, C905, and C908.

Belongs to the class-I aminoacyl-tRNA synthetase family. IleS type 1 subfamily. As to quaternary structure, monomer. Zn(2+) is required as a cofactor.

It is found in the cytoplasm. The enzyme catalyses tRNA(Ile) + L-isoleucine + ATP = L-isoleucyl-tRNA(Ile) + AMP + diphosphate. In terms of biological role, catalyzes the attachment of isoleucine to tRNA(Ile). As IleRS can inadvertently accommodate and process structurally similar amino acids such as valine, to avoid such errors it has two additional distinct tRNA(Ile)-dependent editing activities. One activity is designated as 'pretransfer' editing and involves the hydrolysis of activated Val-AMP. The other activity is designated 'posttransfer' editing and involves deacylation of mischarged Val-tRNA(Ile). In Oceanobacillus iheyensis (strain DSM 14371 / CIP 107618 / JCM 11309 / KCTC 3954 / HTE831), this protein is Isoleucine--tRNA ligase 1.